A 359-amino-acid chain; its full sequence is 3-dehydroquinate synthase (359 aa).

Residues S69–K74, G103–D107, T127–T128, K139, K148, and T166–T169 contribute to the NAD(+) site. E181, H242, and H259 together coordinate Zn(2+).

This sequence belongs to the sugar phosphate cyclases superfamily. Dehydroquinate synthase family. NAD(+) serves as cofactor. Co(2+) is required as a cofactor. The cofactor is Zn(2+).

It is found in the cytoplasm. The enzyme catalyses 7-phospho-2-dehydro-3-deoxy-D-arabino-heptonate = 3-dehydroquinate + phosphate. Its pathway is metabolic intermediate biosynthesis; chorismate biosynthesis; chorismate from D-erythrose 4-phosphate and phosphoenolpyruvate: step 2/7. Functionally, catalyzes the conversion of 3-deoxy-D-arabino-heptulosonate 7-phosphate (DAHP) to dehydroquinate (DHQ). This is 3-dehydroquinate synthase from Oceanobacillus iheyensis (strain DSM 14371 / CIP 107618 / JCM 11309 / KCTC 3954 / HTE831).